Here is a 642-residue protein sequence, read N- to C-terminus: Transmembrane 9 superfamily member 4 (642 aa).

An N-terminal signal peptide occupies residues 1–23; that stretch reads MATAMDWLPWSLLLFSLMCETSA. Over 24-281 the chain is Extracellular; it reads FYVPGVAPIN…TMSDVQIHWF (258 aa). A helical membrane pass occupies residues 282 to 302; that stretch reads SIINSVVVVFFLSGILSMIII. At 303 to 346 the chain is on the cytoplasmic side; sequence RTLRKDIANYNKEDDIEDTMEESGWKLVHGDVFRPPQYPMILSS. A Phosphotyrosine modification is found at tyrosine 312. The chain crosses the membrane as a helical span at residues 347 to 367; sequence LLGSGIQLFCMILIVIFVAML. Topologically, residues 368 to 376 are extracellular; it reads GMLSPSSRG. The helical transmembrane segment at 377–397 threads the bilayer; that stretch reads ALMTTACFLFMFMGVFGGFSA. Residues 398-416 are Cytoplasmic-facing; it reads GRLYRTLKGHRWKKGAFCT. Residues 417 to 437 traverse the membrane as a helical segment; sequence ATLYPGVVFGICFVLNCFIWG. Topologically, residues 438–449 are extracellular; sequence KHSSGAVPFPTM. A helical membrane pass occupies residues 450–470; the sequence is VALLCMWFGISLPLVYLGYYF. Residues 471–501 lie on the Cytoplasmic side of the membrane; the sequence is GFRKQPYDNPVRTNQIPRQIPEQRWYMNRFV. Residues 502 to 522 traverse the membrane as a helical segment; it reads GILMAGILPFGAMFIELFFIF. Topologically, residues 523–535 are extracellular; it reads SAIWENQFYYLFG. Residues 536–556 traverse the membrane as a helical segment; that stretch reads FLFLVFIILVVSCSQISIVMV. Residues 557 to 570 lie on the Cytoplasmic side of the membrane; sequence YFQLCAEDYRWWWR. A helical transmembrane segment spans residues 571–591; that stretch reads NFLVSGGSAFYVLVYAIFYFV. The Extracellular segment spans residues 592–598; that stretch reads NKLDIVE. The helical transmembrane segment at 599-619 threads the bilayer; that stretch reads FIPSLLYFGYTALMVLSFWLL. The Cytoplasmic segment spans residues 620-642; it reads TGTIGFYAAYMFVRKIYAAVKID.

This sequence belongs to the nonaspanin (TM9SF) (TC 9.A.2) family. As to quaternary structure, interacts with ATP6V1H in colon cancer cells. As to expression, highly expressed in metastatic melanoma cells whereas it is undetectable in primary melanoma cells, healthy skin tissues and peripheral blood lymphocytes. Expressed in CD34(+) hematopoietic progenitor cells and during monocyte and granulocyte differentiation. Overexpressed in acute myeloid leukemia, in particular in those displaying granulocytic differentiation (at protein level).

It localises to the membrane. The protein resides in the golgi apparatus. Its subcellular location is the early endosome. In terms of biological role, associates with proteins harboring glycine-rich transmembrane domains and ensures their efficient localization to the cell surface. Regulates the assembly and activity of V-ATPase in colon cancer cells via its interaction with V-type proton ATPase subunit H (ATP6V1H) and contributes to V-ATPase-mediated pH alterations in cancer cells which play an important role in drug resistance and invasiveness of colon cancer cells. Plays an important role in an atypical phagocytic activity of metastatic melanoma cells called cannibalism and is involved in the pH regulation of the intracellular vesicles in tumor cells. The chain is Transmembrane 9 superfamily member 4 (TM9SF4) from Homo sapiens (Human).